The chain runs to 428 residues: Enolase (428 aa).

Residue Gln163 participates in (2R)-2-phosphoglycerate binding. Glu205 (proton donor) is an active-site residue. Mg(2+) contacts are provided by Asp242, Glu285, and Asp312. (2R)-2-phosphoglycerate contacts are provided by Lys337, Arg366, Ser367, and Lys388. Lys337 acts as the Proton acceptor in catalysis.

Belongs to the enolase family. Mg(2+) is required as a cofactor.

The protein localises to the cytoplasm. The protein resides in the secreted. Its subcellular location is the cell surface. It carries out the reaction (2R)-2-phosphoglycerate = phosphoenolpyruvate + H2O. It functions in the pathway carbohydrate degradation; glycolysis; pyruvate from D-glyceraldehyde 3-phosphate: step 4/5. Catalyzes the reversible conversion of 2-phosphoglycerate (2-PG) into phosphoenolpyruvate (PEP). It is essential for the degradation of carbohydrates via glycolysis. This Neisseria meningitidis serogroup A / serotype 4A (strain DSM 15465 / Z2491) protein is Enolase.